The primary structure comprises 598 residues: Membrane protein insertase YidC (598 aa).

A helical transmembrane segment spans residues 7-27 (NYFIAIALSVLIVLGWQFLYM). The segment at 37–76 (AQEAQKAQQQTEQVQQPAAGGQTPAQTSGAAPSGQAAATA) is disordered. The span at 40-76 (AQKAQQQTEQVQQPAAGGQTPAQTSGAAPSGQAAATA) shows a compositional bias: low complexity. Helical transmembrane passes span 377 to 397 (FGVAILCTTIVVKALFFPLAS), 447 to 467 (WPVALQIPIFFSLYKVIYITI), 492 to 512 (LFGLLPFEGPTLLHLGVWPLI), and 538 to 558 (WMPLVFMFMLASFPAGLVIYW).

Belongs to the OXA1/ALB3/YidC family. Type 1 subfamily. Interacts with the Sec translocase complex via SecD. Specifically interacts with transmembrane segments of nascent integral membrane proteins during membrane integration.

The protein resides in the cell inner membrane. Functionally, required for the insertion and/or proper folding and/or complex formation of integral membrane proteins into the membrane. Involved in integration of membrane proteins that insert both dependently and independently of the Sec translocase complex, as well as at least some lipoproteins. Aids folding of multispanning membrane proteins. The sequence is that of Membrane protein insertase YidC from Rhizobium johnstonii (strain DSM 114642 / LMG 32736 / 3841) (Rhizobium leguminosarum bv. viciae).